Reading from the N-terminus, the 481-residue chain is UDP-N-acetylmuramoylalanine--D-glutamate ligase (481 aa).

108-114 (GTNGKTS) lines the ATP pocket.

This sequence belongs to the MurCDEF family.

Its subcellular location is the cytoplasm. The catalysed reaction is UDP-N-acetyl-alpha-D-muramoyl-L-alanine + D-glutamate + ATP = UDP-N-acetyl-alpha-D-muramoyl-L-alanyl-D-glutamate + ADP + phosphate + H(+). It functions in the pathway cell wall biogenesis; peptidoglycan biosynthesis. Its function is as follows. Cell wall formation. Catalyzes the addition of glutamate to the nucleotide precursor UDP-N-acetylmuramoyl-L-alanine (UMA). The protein is UDP-N-acetylmuramoylalanine--D-glutamate ligase of Bifidobacterium longum (strain DJO10A).